The following is a 79-amino-acid chain: Protein FAM236A (79 aa).

Belongs to the FAM236 family.

The chain is Protein FAM236A from Homo sapiens (Human).